A 152-amino-acid chain; its full sequence is UPF0266 membrane protein YobD (152 aa).

A run of 3 helical transmembrane segments spans residues 6–26, 45–65, and 67–87; these read LVLILFIAALLAYALYDQFIM, VDSVIFVGLVAILIYNNVTSH, and AQMTTWLLSALALMGFYIFWI.

It belongs to the UPF0266 family.

The protein localises to the cell inner membrane. This Salmonella choleraesuis (strain SC-B67) protein is UPF0266 membrane protein YobD.